The following is a 443-amino-acid chain: Phosphoglucosamine mutase (443 aa).

Ser-101 (phosphoserine intermediate) is an active-site residue. Mg(2+) contacts are provided by Ser-101, Asp-239, Asp-241, and Asp-243. The residue at position 101 (Ser-101) is a Phosphoserine.

It belongs to the phosphohexose mutase family. It depends on Mg(2+) as a cofactor. Activated by phosphorylation.

It carries out the reaction alpha-D-glucosamine 1-phosphate = D-glucosamine 6-phosphate. Functionally, catalyzes the conversion of glucosamine-6-phosphate to glucosamine-1-phosphate. This is Phosphoglucosamine mutase from Francisella tularensis subsp. novicida (strain U112).